Consider the following 406-residue polypeptide: Phosphopentomutase (406 aa).

6 residues coordinate Mn(2+): aspartate 10, aspartate 305, histidine 310, aspartate 346, histidine 347, and histidine 358.

This sequence belongs to the phosphopentomutase family. The cofactor is Mn(2+).

Its subcellular location is the cytoplasm. It catalyses the reaction 2-deoxy-alpha-D-ribose 1-phosphate = 2-deoxy-D-ribose 5-phosphate. The enzyme catalyses alpha-D-ribose 1-phosphate = D-ribose 5-phosphate. Its pathway is carbohydrate degradation; 2-deoxy-D-ribose 1-phosphate degradation; D-glyceraldehyde 3-phosphate and acetaldehyde from 2-deoxy-alpha-D-ribose 1-phosphate: step 1/2. Isomerase that catalyzes the conversion of deoxy-ribose 1-phosphate (dRib-1-P) and ribose 1-phosphate (Rib-1-P) to deoxy-ribose 5-phosphate (dRib-5-P) and ribose 5-phosphate (Rib-5-P), respectively. The polypeptide is Phosphopentomutase (Sinorhizobium medicae (strain WSM419) (Ensifer medicae)).